The sequence spans 253 residues: Large ribosomal subunit protein uL4 (253 aa).

It belongs to the universal ribosomal protein uL4 family. As to quaternary structure, part of the 50S ribosomal subunit.

Functionally, one of the primary rRNA binding proteins, this protein initially binds near the 5'-end of the 23S rRNA. It is important during the early stages of 50S assembly. It makes multiple contacts with different domains of the 23S rRNA in the assembled 50S subunit and ribosome. Its function is as follows. Forms part of the polypeptide exit tunnel. This is Large ribosomal subunit protein uL4 from Methanococcoides burtonii (strain DSM 6242 / NBRC 107633 / OCM 468 / ACE-M).